Consider the following 183-residue polypeptide: Dermatopontin (183 aa).

A Pyrrolidone carboxylic acid modification is found at Gln-1. Tyr-5 carries the post-translational modification Sulfotyrosine. Repeat copies occupy residues 8-61 (PYQQ…ACMP), 52-57 (DRQWNY), 62-117 (TPQS…CCRY), and 107-112 (DREWQF). The 2 X 53-55 AA tandem repeats stretch occupies residues 8 to 117 (PYQQYHDYSD…REWQFYCCRY (110 aa)). Disulfide bonds link Cys-32–Cys-59, Cys-72–Cys-114, Cys-88–Cys-115, Cys-121–Cys-178, and Cys-125–Cys-171. The segment at 52–168 (DRQWNYACMP…AVERDRQWKF (117 aa)) is 3 X 6 AA tandem repeats of D-R-[EQ]-W-[NQK]-[FY]. A sulfotyrosine mark is found at Tyr-144, Tyr-146, Tyr-148, and Tyr-149. The 2-3 repeat unit spans residues 163–168 (DRQWKF). At Tyr-176 the chain carries Sulfotyrosine.

This sequence belongs to the dermatopontin family. In terms of assembly, interacts with TGFB1, DCN and collagen. In terms of processing, sulfated on tyrosine residue(s). In terms of tissue distribution, detected in skin, skeletal muscle, heart, lung, articular cartilage, long bone and calvaria. Smaller amounts detected in kidney. Not detected in brain, liver or spleen.

It localises to the secreted. It is found in the extracellular space. Its subcellular location is the extracellular matrix. Its function is as follows. Seems to mediate adhesion by cell surface integrin binding. May serve as a communication link between the dermal fibroblast cell surface and its extracellular matrix environment. Enhances TGFB1 activity. Inhibits cell proliferation. Accelerates collagen fibril formation, and stabilizes collagen fibrils against low-temperature dissociation. The chain is Dermatopontin (DPT) from Sus scrofa (Pig).